The chain runs to 173 residues: MADTARGTHHDIIGRDQYPMMGRDRDQYQMSGRGSDYSKSRQIAKAATAVTAGGSLLVLSSLTLVGTVIALTVATPLLVIFSPILVPALITVALLITGFLSSGGFGIAAITVFSWIYKYATGEHPQGSDKLDSARMKLGSKAQDLKDRAQYYGQQHTGGEHDRDRTRGGQHTT.

Positions 1–45 are polar; it reads MADTARGTHHDIIGRDQYPMMGRDRDQYQMSGRGSDYSKSRQIAK. The hydrophobic stretch occupies residues 46–117; sequence AATAVTAGGS…AAITVFSWIY (72 aa). 3 consecutive transmembrane segments (helical) span residues 54–74, 76–96, and 97–117; these read GSLLVLSSLTLVGTVIALTVA, PLLVIFSPILVPALITVALLI, and TGFLSSGGFGIAAITVFSWIY. Residues 151-173 form a disordered region; it reads YYGQQHTGGEHDRDRTRGGQHTT. Residues 158-167 show a composition bias toward basic and acidic residues; it reads GGEHDRDRTR.

It belongs to the oleosin family.

Its subcellular location is the lipid droplet. The protein localises to the membrane. In terms of biological role, may have a structural role to stabilize the lipid body during desiccation of the seed by preventing coalescence of the oil. Probably interacts with both lipid and phospholipid moieties of lipid bodies. May also provide recognition signals for specific lipase anchorage in lipolysis during seedling growth. This chain is Oleosin 18.5 kDa, found in Arabidopsis thaliana (Mouse-ear cress).